Consider the following 446-residue polypeptide: Glutamine synthetase (446 aa).

Residues arginine 15–glycine 102 form the GS beta-grasp domain. Residues serine 109–leucine 446 enclose the GS catalytic domain. Glutamate 132 and glutamate 134 together coordinate Mg(2+). Residue glutamate 184 participates in ATP binding. Residues glutamate 189 and glutamate 196 each coordinate Mg(2+). Glycine 241 serves as a coordination point for L-glutamate. A Mg(2+)-binding site is contributed by histidine 245. Residues histidine 247–serine 249 and serine 249 contribute to the ATP site. L-glutamate contacts are provided by arginine 298, glutamate 304, and arginine 316. ATP-binding residues include arginine 316 and arginine 321. Residue glutamate 336 participates in Mg(2+) binding. Arginine 338 contacts L-glutamate. An Isoglutamyl lysine isopeptide (Lys-Gln) (interchain with Q-Cter in protein Pup) cross-link involves residue lysine 363.

Belongs to the glutamine synthetase family. Oligomer of 12 subunits arranged in the form of two hexagons. In its feedback-inhibited form, interacts with TnrA in order to block its DNA-binding activity. Mg(2+) serves as cofactor.

It localises to the cytoplasm. The catalysed reaction is L-glutamate + NH4(+) + ATP = L-glutamine + ADP + phosphate + H(+). Inhibited by glutamine. Functionally, glutamine synthetase (GS) is an unusual multitasking protein that functions as an enzyme, a transcription coregulator, and a chaperone in ammonium assimilation and in the regulation of genes involved in nitrogen metabolism. It catalyzes the ATP-dependent biosynthesis of glutamine from glutamate and ammonia. Feedback-inhibited GlnA also interacts with and regulates the activity of the transcriptional regulator TnrA. During nitrogen limitation, TnrA is in its DNA-binding active state and turns on the transcription of genes required for nitrogen assimilation. Under conditions of nitrogen excess, feedback-inhibited GlnA forms a stable complex with TnrA, which inhibits its DNA-binding activity. In contrast, feedback-inhibited GlnA acts as a chaperone to stabilize the DNA-binding activity of GlnR, which represses the transcription of nitrogen assimilation genes. This is Glutamine synthetase from Mycolicibacterium smegmatis (strain ATCC 700084 / mc(2)155) (Mycobacterium smegmatis).